We begin with the raw amino-acid sequence, 161 residues long: uncharacterized protein (161 aa).

2 disordered regions span residues 47-83 and 104-137; these read KPAK…NNIN and RRLQ…SKNY. Over residues 50–64 the composition is skewed to basic residues; that stretch reads KRNIHGHNNHTRSSN. Composition is skewed to low complexity over residues 73-83 and 115-130; these read NINHNNNNNIN and SSSS…TNDN.

This is an uncharacterized protein from Dictyostelium discoideum (Social amoeba).